The sequence spans 198 residues: Holliday junction branch migration complex subunit RuvA (198 aa).

The tract at residues 1–61 (MILYRIGEII…EYQYATYAFK (61 aa)) is domain I. The interval 62 to 139 (DFKERLLFVD…KMISPKDAAK (78 aa)) is domain II. The interval 140–144 (INETT) is flexible linker. The domain III stretch occupies residues 144-198 (TNTLSEVKETLKMVGFKTKQIDGALSKISSTDDVEKMIEEAIKLMSTQNYESATA).

This sequence belongs to the RuvA family. As to quaternary structure, homotetramer. Forms an RuvA(8)-RuvB(12)-Holliday junction (HJ) complex. HJ DNA is sandwiched between 2 RuvA tetramers; dsDNA enters through RuvA and exits via RuvB. An RuvB hexamer assembles on each DNA strand where it exits the tetramer. Each RuvB hexamer is contacted by two RuvA subunits (via domain III) on 2 adjacent RuvB subunits; this complex drives branch migration. In the full resolvosome a probable DNA-RuvA(4)-RuvB(12)-RuvC(2) complex forms which resolves the HJ.

It is found in the cytoplasm. Functionally, the RuvA-RuvB-RuvC complex processes Holliday junction (HJ) DNA during genetic recombination and DNA repair, while the RuvA-RuvB complex plays an important role in the rescue of blocked DNA replication forks via replication fork reversal (RFR). RuvA specifically binds to HJ cruciform DNA, conferring on it an open structure. The RuvB hexamer acts as an ATP-dependent pump, pulling dsDNA into and through the RuvAB complex. HJ branch migration allows RuvC to scan DNA until it finds its consensus sequence, where it cleaves and resolves the cruciform DNA. The protein is Holliday junction branch migration complex subunit RuvA of Mycoplasmopsis agalactiae (strain NCTC 10123 / CIP 59.7 / PG2) (Mycoplasma agalactiae).